The following is a 947-amino-acid chain: Protein RRC1-like (947 aa).

Residues 1–11 are compositionally biased toward basic and acidic residues; that stretch reads MVKDEFFLDHP. 2 disordered regions span residues 1 to 35 and 63 to 167; these read MVKD…RMKQ and PNDN…DELP. The span at 12-34 shows a compositional bias: basic residues; sequence GRKHRSRNTEKKKKPRRRERRMK. Basic and acidic residues-rich tracts occupy residues 66-84 and 104-155; these read NKLK…DSIS and KGPE…DHNS. An RRM domain is found at 187–268; that stretch reads TNLYVVNLSS…YELKIGWGKV (82 aa). The stretch at 336–379 is one SURP motif repeat; it reads IIDTMALNVLDGGCAFEQAIMERGRGNPLFNFLFELGSKEHTYY. Positions 412–434 are disordered; the sequence is PPLPATRSPEHGKESRGTYAAGK. The region spanning 444 to 589 is the CID domain; it reads LTDSQRDEFE…GLRATFLRSR (146 aa). An SAP domain is found at 638 to 672; it reads LMNRPISELERRCRHNGLSLLGGREMMVARLVCLK. Disordered regions lie at residues 752 to 797 and 846 to 947; these read REDD…PENE and GLSG…RGMR. Basic and acidic residues-rich tracts occupy residues 854 to 876, 888 to 916, and 924 to 947; these read LPEK…RSES, LTRE…LDKD, and SSRE…RGMR.

As to expression, expressed in leaves, inflorescence stems, roots, flower buds, open flowers and siliques.

In terms of biological role, probable SR-like splicing factor. The protein is Protein RRC1-like of Arabidopsis thaliana (Mouse-ear cress).